Reading from the N-terminus, the 263-residue chain is MSAEIIASIADVLTDNIPLTPISQGAEAVVFTSPVHPYLPKNRTDGDDKLYILKYRPEKKYRHPVIDKTLTKHRTLGESRLLAKLRLIDGLNVPKLIGCDPYHGCIWLEFLGEDLPNGHGFSNLKNFLWMNASDPYSDLVRDTMINVGKQIGLMHWNDYCHGDLTTSNIVLVRAGEDWQPYLIDFGLGSISTLVEDKGVDLYVLERAIISTHSSFANRYNLWVLEGFKSVFESHGKAGLGKYKDLIRRFEEVRLRGRKRSMIG.

Residues 16-263 (NIPLTPISQG…LRGRKRSMIG (248 aa)) enclose the Protein kinase domain. Residues 22–30 (ISQGAEAVV) and K54 contribute to the ATP site. The active-site Proton acceptor is the D163.

This sequence belongs to the protein kinase superfamily. BUD32 family. In terms of assembly, component of the EKC/KEOPS complex composed of at least BUD32, CGI121, GON7, KAE1 and PCC1; the whole complex dimerizes.

It localises to the cytoplasm. The protein localises to the nucleus. The protein resides in the chromosome. It is found in the telomere. It carries out the reaction L-seryl-[protein] + ATP = O-phospho-L-seryl-[protein] + ADP + H(+). The catalysed reaction is L-threonyl-[protein] + ATP = O-phospho-L-threonyl-[protein] + ADP + H(+). Its function is as follows. Component of the EKC/KEOPS complex that is required for the formation of a threonylcarbamoyl group on adenosine at position 37 (t(6)A37) in tRNAs that read codons beginning with adenine. The complex is probably involved in the transfer of the threonylcarbamoyl moiety of threonylcarbamoyl-AMP (TC-AMP) to the N6 group of A37. BUD32 has ATPase activity in the context of the EKC/KEOPS complex and likely plays a supporting role to the catalytic subunit KAE1. The EKC/KEOPS complex also promotes both telomere uncapping and telomere elongation. The complex is required for efficient recruitment of transcriptional coactivators. The protein is EKC/KEOPS complex subunit BUD32 (BUD32) of Kluyveromyces lactis (strain ATCC 8585 / CBS 2359 / DSM 70799 / NBRC 1267 / NRRL Y-1140 / WM37) (Yeast).